A 427-amino-acid polypeptide reads, in one-letter code: 3-phosphoshikimate 1-carboxyvinyltransferase (427 aa).

3-phosphoshikimate contacts are provided by Lys20, Ser21, and Arg25. Residue Lys20 participates in phosphoenolpyruvate binding. The phosphoenolpyruvate site is built by Gly90 and Arg118. The 3-phosphoshikimate site is built by Ser163, Ser164, Gln165, Ser191, Asp309, and Lys336. Gln165 is a binding site for phosphoenolpyruvate. Asp309 functions as the Proton acceptor in the catalytic mechanism. 2 residues coordinate phosphoenolpyruvate: Arg340 and Arg381.

The protein belongs to the EPSP synthase family. In terms of assembly, monomer.

The protein localises to the cytoplasm. It carries out the reaction 3-phosphoshikimate + phosphoenolpyruvate = 5-O-(1-carboxyvinyl)-3-phosphoshikimate + phosphate. The protein operates within metabolic intermediate biosynthesis; chorismate biosynthesis. Functionally, catalyzes the transfer of the enolpyruvyl moiety of phosphoenolpyruvate (PEP) to the 5-hydroxyl of shikimate-3-phosphate (S3P) to produce enolpyruvyl shikimate-3-phosphate and inorganic phosphate. This chain is 3-phosphoshikimate 1-carboxyvinyltransferase, found in Methanococcoides burtonii (strain DSM 6242 / NBRC 107633 / OCM 468 / ACE-M).